The chain runs to 174 residues: Small ribosomal subunit protein uS5 (174 aa).

In terms of domain architecture, S5 DRBM spans 19 to 82 (LREKMIAVNR…EQARRGMFKV (64 aa)).

This sequence belongs to the universal ribosomal protein uS5 family. In terms of assembly, part of the 30S ribosomal subunit. Contacts proteins S4 and S8.

Its function is as follows. With S4 and S12 plays an important role in translational accuracy. Located at the back of the 30S subunit body where it stabilizes the conformation of the head with respect to the body. This Bordetella bronchiseptica (strain ATCC BAA-588 / NCTC 13252 / RB50) (Alcaligenes bronchisepticus) protein is Small ribosomal subunit protein uS5.